Reading from the N-terminus, the 431-residue chain is Putative F-box/FBD/LRR-repeat protein At4g26350 (431 aa).

The F-box domain maps to 1–47; that stretch reads MDIISQCPDHLLLRILSFIPTKDVIVTSLLSKRWGSLWRWVPKLEYD. LRR repeat units lie at residues 52–78, 85–109, 132–159, 160–185, and 309–334; these read NMRFVKFVYRSLLQNNAPVLESLHLKN, CRTVDIGGWIDIAVSRRVRELEISI, ILTIKHCHLVDVPLAVCLPSLKKLHLRC, IGWAYNATLLRLISGCTNLEELRLAR, and CTQGWWDLLTHMLQGSPKLRFLTLTN. Residues 348–398 form the FBD domain; the sequence is CWKRPSSVPACLLSSLQAFTWSGYKGRQGDKEVVKYVLRNATGLKKRIFIS.

This is Putative F-box/FBD/LRR-repeat protein At4g26350 from Arabidopsis thaliana (Mouse-ear cress).